We begin with the raw amino-acid sequence, 300 residues long: MVEINGVPVEDTFCEAFKGLYARFIVTAADERPLREAAENVAALPATVFGESEAGVERWLDPEETPDGRPGFVAQMWVEYGDDAVKKLEHELGKRIRQGVLVRPTTRVFDACEDPDGYIDTERPIGRCADGYEYTDVRFDREMVHVPIMMGEFLIERRLGYAEGVAGGLVWLFCEDVDAALEAGYRAVEALRDVEGVITPFNVCAAGSKPETIYPDIGPTTNHPYCPTLRDRILDSKVPEGVEAIPEIVINGVSLDVVKRAIGIAIEAATEVDGVVKVSAGNFGGKLGDYRIPLRECIRE.

The protein belongs to the FTR family.

The chain is Formylmethanofuran--tetrahydromethanopterin formyltransferase-like protein from Methanopyrus kandleri (strain AV19 / DSM 6324 / JCM 9639 / NBRC 100938).